Consider the following 520-residue polypeptide: Pentatricopeptide repeat-containing protein At1g28690, mitochondrial (520 aa).

The N-terminal 19 residues, 1–19, are a transit peptide targeting the mitochondrion; it reads MRIFRFTSISPRILPSNHY. 11 PPR repeats span residues 68–98, 99–133, 134–168, 174–208, 209–235, 236–271, 272–306, 307–337, 338–372, 373–403, and 409–439; these read DLNISIKLLILHLKCGCLSYARQVFDELPKP, TLSAYNYMISGYLKHGLVKELLLLVQRMSYSGEKA, DGYTLSMVLKASNSRGSTMILPRSLCRLVHARIIK, DDVLITALVDTYVKSGKLESARTVFETMKDENVVC, CTSMISGYMNQGFVEDAEEIFNTTKVK, DIVVYNAMVEGFSRSGETAKRSVDMYISMQRAGFHP, NISTFASVIGACSVLTSHEVGQQVHAQIMKSGVYT, HIKMGSSLLDMYAKCGGINDARRVFDQMQEK, NVFSWTSMIDGYGKNGNPEEALELFTRMKEFRIEP, NYVTFLGALSACSHSGLVDKGYEIFESMQRD, and KMEHYACIVDLMGRAGDLNKAFEFARAMPER. The tract at residues 444-520 is type E motif; it reads IWAALLSSCN…TIGRSWTSED (77 aa).

Belongs to the PPR family. PCMP-E subfamily.

The protein resides in the mitochondrion. This Arabidopsis thaliana (Mouse-ear cress) protein is Pentatricopeptide repeat-containing protein At1g28690, mitochondrial (PCMP-E34).